The primary structure comprises 157 residues: SUMO-conjugating enzyme UBC9-B (157 aa).

Residues 4–157 (IALSRLAQER…VRAQAKKFSP (154 aa)) enclose the UBC core domain. The segment at 13–18 (RKAWRK) is interaction with SUMO1. Cys-93 functions as the Glycyl thioester intermediate in the catalytic mechanism.

It belongs to the ubiquitin-conjugating enzyme family. Forms a tight complex with rangap1 and ranbp2. Interacts with vsx1.

Its subcellular location is the nucleus. It functions in the pathway protein modification; protein sumoylation. Functionally, accepts the ubiquitin-like proteins sumo1, sumo2 and sumo3 from the uble1a-uble1b E1 complex and catalyzes their covalent attachment to other proteins with the help of an E3 ligase such as ranbp2 or cbx4. Essential for nuclear architecture and chromosome segregation. Mediates nuclear localization of vsx1. Required for progression through mitosis during organogenesis. The protein is SUMO-conjugating enzyme UBC9-B (ube2ib) of Danio rerio (Zebrafish).